Reading from the N-terminus, the 172-residue chain is NAD(P)H-quinone oxidoreductase subunit J (172 aa).

Belongs to the complex I 30 kDa subunit family. NDH-1 can be composed of about 15 different subunits; different subcomplexes with different compositions have been identified which probably have different functions.

It is found in the cellular thylakoid membrane. The enzyme catalyses a plastoquinone + NADH + (n+1) H(+)(in) = a plastoquinol + NAD(+) + n H(+)(out). It catalyses the reaction a plastoquinone + NADPH + (n+1) H(+)(in) = a plastoquinol + NADP(+) + n H(+)(out). Its function is as follows. NDH-1 shuttles electrons from an unknown electron donor, via FMN and iron-sulfur (Fe-S) centers, to quinones in the respiratory and/or the photosynthetic chain. The immediate electron acceptor for the enzyme in this species is believed to be plastoquinone. Couples the redox reaction to proton translocation, and thus conserves the redox energy in a proton gradient. Cyanobacterial NDH-1 also plays a role in inorganic carbon-concentration. This is NAD(P)H-quinone oxidoreductase subunit J from Synechococcus sp. (strain ATCC 27144 / PCC 6301 / SAUG 1402/1) (Anacystis nidulans).